A 512-amino-acid chain; its full sequence is NAD(P)H-quinone oxidoreductase subunit 2 B, chloroplastic (512 aa).

14 consecutive transmembrane segments (helical) span residues F31–T51, I57–F77, I99–I119, M124–C144, L149–Y169, Y183–G203, I229–F249, P261–T281, W295–I315, M323–D343, Y354–L374, A395–F415, L418–L438, and M484–I504.

Belongs to the complex I subunit 2 family. In terms of assembly, NDH is composed of at least 16 different subunits, 5 of which are encoded in the nucleus.

The protein localises to the plastid. Its subcellular location is the chloroplast thylakoid membrane. The catalysed reaction is a plastoquinone + NADH + (n+1) H(+)(in) = a plastoquinol + NAD(+) + n H(+)(out). The enzyme catalyses a plastoquinone + NADPH + (n+1) H(+)(in) = a plastoquinol + NADP(+) + n H(+)(out). Its function is as follows. NDH shuttles electrons from NAD(P)H:plastoquinone, via FMN and iron-sulfur (Fe-S) centers, to quinones in the photosynthetic chain and possibly in a chloroplast respiratory chain. The immediate electron acceptor for the enzyme in this species is believed to be plastoquinone. Couples the redox reaction to proton translocation, and thus conserves the redox energy in a proton gradient. This chain is NAD(P)H-quinone oxidoreductase subunit 2 B, chloroplastic, found in Arabidopsis thaliana (Mouse-ear cress).